The following is a 155-amino-acid chain: Small ribosomal subunit protein uS7c (155 aa).

This sequence belongs to the universal ribosomal protein uS7 family. Part of the 30S ribosomal subunit.

It is found in the plastid. One of the primary rRNA binding proteins, it binds directly to 16S rRNA where it nucleates assembly of the head domain of the 30S subunit. The sequence is that of Small ribosomal subunit protein uS7c (rps7) from Aneura mirabilis (Parasitic liverwort).